The chain runs to 579 residues: Rhoptry surface protein CERLI2 (579 aa).

The C2 domain occupies 52 to 84 (LHNYRTFYLLIKINEIFNINKYKQIYIIVNTDK). 11 repeat units span residues 442-451 (QTDEIKNDNI), 452-461 (QTDEIKNDHI), 462-471 (QTDEIKNDNI), 472-481 (QTDEIKNDNI), 482-491 (QTDEIKNDHI), 492-501 (QTDEIKNDNI), 502-511 (QTDEIKNDNI), 522-531 (QTDEINNDHI), 532-541 (QTDEIKNDHI), 542-551 (QTDEIKNDHI), and 552-561 (QTDEIKNDIN). The interval 442–561 (QTDEIKNDNI…QTDEIKNDIN (120 aa)) is 12 X 10 AA tandem repeat of Q-T-E-I-[K/N]-N-D-[H/N/I][I/N].

Its subcellular location is the cytoplasmic vesicle. The protein resides in the secretory vesicle. It is found in the rhoptry membrane. It localises to the cell membrane. The protein localises to the host cell membrane. Functionally, plays an important role in rhoptry physiology and thus is essential for merozoite invasion of host erythrocytes. This is Rhoptry surface protein CERLI2 from Plasmodium falciparum (isolate 3D7).